We begin with the raw amino-acid sequence, 744 residues long: Prestin (744 aa).

Residues 1 to 79 are Cytoplasmic-facing; sequence MDHAEENEIP…WLPAYKFKEY (79 aa). The helical transmembrane segment at 80–105 threads the bilayer; that stretch reads VLGDLVSGISTGVLQLPQGLAFAMLA. The Extracellular portion of the chain corresponds to 106–109; that stretch reads AVPP. The helical transmembrane segment at 110-125 threads the bilayer; the sequence is VFGLYSSFYPVIMYCF. Residues 126–137 are Cytoplasmic-facing; the sequence is FGTSRHISIGPF. The chain crosses the membrane as a helical span at residues 138–147; the sequence is AVISLMIGGV. Residues 148-178 lie on the Extracellular side of the membrane; that stretch reads AVRLVPDDIVIPGGVNATNGTEARDALRVKV. The short motif at 158–168 is the Involved in motor function element; sequence IPGGVNATNGT. 2 N-linked (GlcNAc...) asparagine glycosylation sites follow: N163 and N166. The chain crosses the membrane as a helical span at residues 179–196; it reads AMSVTLLSGIIQFCLGVC. The Cytoplasmic segment spans residues 197–208; the sequence is RFGFVAIYLTEP. The helical transmembrane segment at 209–230 threads the bilayer; it reads LVRGFTTAAAVHVFTSMLKYLF. Residues 231-243 lie on the Extracellular side of the membrane; it reads GVKTKRYSGIFSV. The helical intramembrane region spans 244 to 252; the sequence is VYSTVAVLQ. The Extracellular portion of the chain corresponds to 253 to 258; it reads NVKNLN. The helical transmembrane segment at 259-282 threads the bilayer; it reads VCSLGVGLMVFGLLLGGKEFNERF. At 283–291 the chain is on the cytoplasmic side; it reads KEKLPAPIP. The chain crosses the membrane as a helical span at residues 292-304; that stretch reads LEFFAVVMGTGIS. The Extracellular portion of the chain corresponds to 305–337; it reads AGFNLHESYSVDVVGTLPLGLLPPANPDTSLFH. A helical transmembrane segment spans residues 338 to 361; sequence LVYVDAIAIAIVGFSVTISMAKTL. Residues 362 to 370 are Cytoplasmic-facing; the sequence is ANKHGYQVD. A helical membrane pass occupies residues 371-388; that stretch reads GNQELIALGICNSIGSLF. The Extracellular portion of the chain corresponds to 389-396; the sequence is QTFSISCS. A helical membrane pass occupies residues 397 to 406; sequence LSRSLVQEGT. S398 serves as a coordination point for salicylate. Over 407–410 the chain is Cytoplasmic; the sequence is GGKT. The helical transmembrane segment at 411 to 429 threads the bilayer; sequence QLAGCLASLMILLVILATG. The Extracellular portion of the chain corresponds to 430–436; sequence FLFESLP. The helical transmembrane segment at 437–455 threads the bilayer; that stretch reads QAVLSAIVIVNLKGMFMQF. The Cytoplasmic segment spans residues 456–469; the sequence is SDLPFFWRTSKIEL. Residues 470–484 traverse the membrane as a helical segment; it reads TIWLTTFVSSLFLGL. D485 is a topological domain (extracellular). Residues 486-497 traverse the membrane as a helical segment; that stretch reads YGLITAVIIALL. The Cytoplasmic segment spans residues 498 to 744; sequence TVIYRTQSPS…PNATPTTPEA (247 aa). An extended region for STAS domain region spans residues 505–718; it reads SPSYKVLGQL…AVLGSHVREA (214 aa). Residues 525–713 form the STAS domain; the sequence is AYEEVKEIPG…HSIHDAVLGS (189 aa). The interval 717-744 is disordered; the sequence is EAMAEQEASAPPPQDDMEPNATPTTPEA.

Belongs to the SLC26A/SulP transporter (TC 2.A.53) family. As to quaternary structure, homodimer. Interacts (via STAS domain) with CALM; this interaction is calcium-dependent and the STAS domain interacts with only one lobe of CALM which is an elongated conformation. Interacts with MYH1. Highly expressed in mature outer hair cells, but not in inner hair cells or other cells of the basilar membrane and the organ of Corti.

It is found in the lateral cell membrane. The catalysed reaction is 2 hydrogencarbonate(in) + chloride(out) = 2 hydrogencarbonate(out) + chloride(in). Voltage-sensitive motor protein that drives outer hair cell (OHC) electromotility (eM) and participates in sound amplification in the hearing organ. Converts changes in the transmembrane electric potential into mechanical displacements resulting in the coupling of its expansion to movement of a charged voltage sensor across the lipid membrane. The nature of the voltage sensor is not completely clear, and two models compete. In the first model, acts as an incomplete transporter where intracellular chloride anion acts as extrinsic voltage sensor that drives conformational change in the protein which is sufficient to produce a length change in the plane of the membrane and hence in the length of the OHC. The second model in which multiple charged amino acid residues are distributed at the intracellular and extracellular membrane interfaces that form an intrinsic voltage sensor, whose movement produces the non-linear capacitance (NLC). However, the effective voltage sensor may be the result of a hybrid voltage sensor assembled from intrinsic charge (charged residues) and extrinsic charge (bound anion). Notably, binding of anions to the anion-binding pocket partially neutralizes the intrinsic positive charge rather than to form an electrically negative sensor, therefore remaining charge may serve as voltage sensor that, after depolarization, moves from down (expanded state) to up (contracted) conformation, which is accompanied by an eccentric contraction of the intermembrane cross-sectional area of the protein as well as a major increase in the hydrophobic thickness of the protein having as consequences the plasma membrane thickening and the cell contraction after membrane depolarization. The anion-binding pocket transits from the inward-open (Down) state, where it is exposed toward the intracellular solvent in the absence of anion, to the occluded (Up) state upon anion binding. Salicylate competes for the anion-binding site and inhibits the voltage-sensor movement, and therefore inhibits the charge transfer and electromotility by displacing Cl(-) from the anion-binding site and by preventing the structural transitions to the contracted state. In addition, can act as a weak Cl(-)/HCO3 (-) antiporter across the cell membrane and so regulate the intracellular pH of the outer hair cells (OHCs), while firstly found as being unable to mediate electrogenic anion transport. Moreover, supports a role in cardiac mechanical amplification serving as an elastic element to enhance the actomyosin- based sarcomere contraction system. This chain is Prestin, found in Meriones unguiculatus (Mongolian jird).